The primary structure comprises 559 residues: 5'-AMP-activated protein kinase catalytic subunit alpha-1 (559 aa).

One can recognise a Protein kinase domain in the interval 27–279 (YILGDTLGVG…IKDIREHEWF (253 aa)). Thr-32 carries the post-translational modification Phosphothreonine. ATP contacts are provided by residues 33 to 41 (LGVGTFGKV) and Lys-56. Catalysis depends on Asp-150, which acts as the Proton acceptor. The residue at position 183 (Thr-183) is a Phosphothreonine; by LKB1 and CaMKK2. Residues 302–381 (EALKEVCEKF…PERVPFLVAE (80 aa)) form an AIS region. Thr-355 is subject to Phosphothreonine. Phosphoserine is present on Ser-356. At Ser-360 the chain carries Phosphoserine; by ULK1. Thr-368 is modified (phosphothreonine; by ULK1). Residue Thr-382 is modified to Phosphothreonine. Ser-397 carries the phosphoserine; by ULK1 modification. Residues Ser-467 and Ser-486 each carry the phosphoserine modification. A compositionally biased stretch (polar residues) spans 485 to 505 (KSGTATPQRSGSISNYRSCQR). The disordered stretch occupies residues 485–536 (KSGTATPQRSGSISNYRSCQRSDSDAEAQGKPSDVSLTSSVTSLDSSPVDVA). At Thr-488 the chain carries Phosphothreonine; by ULK1. Residue Thr-490 is modified to Phosphothreonine. Ser-496, Ser-508, Ser-524, and Ser-527 each carry phosphoserine. Residues 516 to 535 (PSDVSLTSSVTSLDSSPVDV) are compositionally biased toward low complexity.

This sequence belongs to the protein kinase superfamily. CAMK Ser/Thr protein kinase family. SNF1 subfamily. As to quaternary structure, AMPK is a heterotrimer of an alpha catalytic subunit (PRKAA1 or PRKAA2), a beta (PRKAB1 or PRKAB2) and a gamma non-catalytic subunits (PRKAG1, PRKAG2 or PRKAG3). Interacts with FNIP1 and FNIP2. Requires Mg(2+) as cofactor. Post-translationally, phosphorylated at Thr-183 by STK11/LKB1 in complex with STE20-related adapter-alpha (STRADA) pseudo kinase and CAB39. Also phosphorylated at Thr-183 by CAMKK2; triggered by a rise in intracellular calcium ions, without detectable changes in the AMP/ATP ratio. CAMKK1 can also phosphorylate Thr-183, but at a much lower level. Dephosphorylated by protein phosphatase 2A and 2C (PP2A and PP2C). Phosphorylated by ULK1 and ULK2; leading to negatively regulate AMPK activity and suggesting the existence of a regulatory feedback loop between ULK1, ULK2 and AMPK. Dephosphorylated by PPM1A and PPM1B. In terms of processing, ubiquitinated. Glycosylated; O-GlcNAcylated by OGT, promoting the AMP-activated protein kinase (AMPK) activity.

It localises to the cytoplasm. The protein localises to the nucleus. The catalysed reaction is L-seryl-[protein] + ATP = O-phospho-L-seryl-[protein] + ADP + H(+). It catalyses the reaction L-threonyl-[protein] + ATP = O-phospho-L-threonyl-[protein] + ADP + H(+). The enzyme catalyses L-seryl-[acetyl-CoA carboxylase] + ATP = O-phospho-L-seryl-[acetyl-CoA carboxylase] + ADP + H(+). It carries out the reaction L-seryl-[3-hydroxy-3-methylglutaryl-coenzyme A reductase] + ATP = O-phospho-L-seryl-[3-hydroxy-3-methylglutaryl-coenzyme A reductase] + ADP + H(+). The catalysed reaction is L-seryl-[tau protein] + ATP = O-phospho-L-seryl-[tau protein] + ADP + H(+). It catalyses the reaction L-threonyl-[tau protein] + ATP = O-phospho-L-threonyl-[tau protein] + ADP + H(+). With respect to regulation, activated by phosphorylation on Thr-183. Binding of AMP to non-catalytic gamma subunit (PRKAG1, PRKAG2 or PRKAG3) results in allosteric activation, inducing phosphorylation on Thr-183. AMP-binding to gamma subunit also sustains activity by preventing dephosphorylation of Thr-183. ADP also stimulates Thr-183 phosphorylation, without stimulating already phosphorylated AMPK. ATP promotes dephosphorylation of Thr-183, rendering the enzyme inactive. Under physiological conditions AMPK mainly exists in its inactive form in complex with ATP, which is much more abundant than AMP. Selectively inhibited by compound C (6-[4-(2-Piperidin-1-yl-ethoxy)-phenyl)]-3-pyridin-4-yl-pyyrazolo[1,5-a] pyrimidine. Activated by resveratrol, a natural polyphenol present in red wine, and S17834, a synthetic polyphenol. Functionally, catalytic subunit of AMP-activated protein kinase (AMPK), an energy sensor protein kinase that plays a key role in regulating cellular energy metabolism. In response to reduction of intracellular ATP levels, AMPK activates energy-producing pathways and inhibits energy-consuming processes: inhibits protein, carbohydrate and lipid biosynthesis, as well as cell growth and proliferation. AMPK acts via direct phosphorylation of metabolic enzymes, and by longer-term effects via phosphorylation of transcription regulators. Regulates lipid synthesis by phosphorylating and inactivating lipid metabolic enzymes such as ACACA, ACACB, GYS1, HMGCR and LIPE; regulates fatty acid and cholesterol synthesis by phosphorylating acetyl-CoA carboxylase (ACACA and ACACB) and hormone-sensitive lipase (LIPE) enzymes, respectively. Promotes lipolysis of lipid droplets by mediating phosphorylation of isoform 1 of CHKA (CHKalpha2). Regulates insulin-signaling and glycolysis by phosphorylating IRS1, PFKFB2 and PFKFB3. AMPK stimulates glucose uptake in muscle by increasing the translocation of the glucose transporter SLC2A4/GLUT4 to the plasma membrane, possibly by mediating phosphorylation of TBC1D4/AS160. Regulates transcription and chromatin structure by phosphorylating transcription regulators involved in energy metabolism such as CRTC2/TORC2, FOXO3, histone H2B, HDAC5, MEF2C, MLXIPL/ChREBP, EP300, HNF4A, p53/TP53, SREBF1, SREBF2 and PPARGC1A. Acts as a key regulator of glucose homeostasis in liver by phosphorylating CRTC2/TORC2, leading to CRTC2/TORC2 sequestration in the cytoplasm. In response to stress, phosphorylates 'Ser-36' of histone H2B (H2BS36ph), leading to promote transcription. Acts as a key regulator of cell growth and proliferation by phosphorylating FNIP1, TSC2, RPTOR, WDR24 and ATG1/ULK1: in response to nutrient limitation, negatively regulates the mTORC1 complex by phosphorylating RPTOR component of the mTORC1 complex and by phosphorylating and activating TSC2. Also phosphorylates and inhibits GATOR2 subunit WDR24 in response to nutrient limitation, leading to suppress glucose-mediated mTORC1 activation. In response to energetic stress, phosphorylates FNIP1, inactivating the non-canonical mTORC1 signaling, thereby promoting nuclear translocation of TFEB and TFE3, and inducing transcription of lysosomal or autophagy genes. In response to nutrient limitation, promotes autophagy by phosphorylating and activating ATG1/ULK1. In that process, it also activates WDR45/WIPI4. Phosphorylates CASP6, thereby preventing its autoprocessing and subsequent activation. In response to nutrient limitation, phosphorylates transcription factor FOXO3 promoting FOXO3 mitochondrial import. Also acts as a regulator of cellular polarity by remodeling the actin cytoskeleton; probably by indirectly activating myosin. AMPK also acts as a regulator of circadian rhythm by mediating phosphorylation of CRY1, leading to destabilize it. May regulate the Wnt signaling pathway by phosphorylating CTNNB1, leading to stabilize it. Also has tau-protein kinase activity: in response to amyloid beta A4 protein (APP) exposure, activated by CAMKK2, leading to phosphorylation of MAPT/TAU; however the relevance of such data remains unclear in vivo. Also phosphorylates CFTR, EEF2K, KLC1, NOS3 and SLC12A1. Regulates hepatic lipogenesis. Activated via SIRT3, represses sterol regulatory element-binding protein (SREBP) transcriptional activities and ATP-consuming lipogenesis to restore cellular energy balance. Upon stress, regulates mitochondrial fragmentation through phosphorylation of MTFR1L. This Mus musculus (Mouse) protein is 5'-AMP-activated protein kinase catalytic subunit alpha-1 (Prkaa1).